The primary structure comprises 182 residues: Orotate phosphoribosyltransferase (182 aa).

5-phospho-alpha-D-ribose 1-diphosphate-binding positions include Arg-91, Lys-92, Lys-95, His-97, and 117–125 (EDVTTTGGS). Residues Thr-121 and Arg-149 each contribute to the orotate site.

Belongs to the purine/pyrimidine phosphoribosyltransferase family. PyrE subfamily. Homodimer. It depends on Mg(2+) as a cofactor.

The enzyme catalyses orotidine 5'-phosphate + diphosphate = orotate + 5-phospho-alpha-D-ribose 1-diphosphate. It participates in pyrimidine metabolism; UMP biosynthesis via de novo pathway; UMP from orotate: step 1/2. Catalyzes the transfer of a ribosyl phosphate group from 5-phosphoribose 1-diphosphate to orotate, leading to the formation of orotidine monophosphate (OMP). The polypeptide is Orotate phosphoribosyltransferase (Pyrococcus furiosus (strain ATCC 43587 / DSM 3638 / JCM 8422 / Vc1)).